The primary structure comprises 354 residues: uncharacterized protein (354 aa).

The protein belongs to the asfivirus B354L family.

This is an uncharacterized protein from Ornithodoros (relapsing fever ticks).